The primary structure comprises 201 residues: 3-isopropylmalate dehydratase small subunit (201 aa).

Belongs to the LeuD family. LeuD type 1 subfamily. Heterodimer of LeuC and LeuD.

It catalyses the reaction (2R,3S)-3-isopropylmalate = (2S)-2-isopropylmalate. Its pathway is amino-acid biosynthesis; L-leucine biosynthesis; L-leucine from 3-methyl-2-oxobutanoate: step 2/4. Functionally, catalyzes the isomerization between 2-isopropylmalate and 3-isopropylmalate, via the formation of 2-isopropylmaleate. The chain is 3-isopropylmalate dehydratase small subunit from Rhodopseudomonas palustris (strain BisB18).